The sequence spans 842 residues: Protein translocase subunit SecA (842 aa).

ATP-binding positions include Gln85, 103–107, and Asp493; that span reads GEGKT. Residues Cys825, Cys827, Cys836, and His837 each coordinate Zn(2+).

This sequence belongs to the SecA family. In terms of assembly, monomer and homodimer. Part of the essential Sec protein translocation apparatus which comprises SecA, SecYEG and auxiliary proteins SecDF. Other proteins may also be involved. Requires Zn(2+) as cofactor.

Its subcellular location is the cell membrane. The protein localises to the cytoplasm. The enzyme catalyses ATP + H2O + cellular proteinSide 1 = ADP + phosphate + cellular proteinSide 2.. Its function is as follows. Part of the Sec protein translocase complex. Interacts with the SecYEG preprotein conducting channel. Has a central role in coupling the hydrolysis of ATP to the transfer of proteins into and across the cell membrane, serving as an ATP-driven molecular motor driving the stepwise translocation of polypeptide chains across the membrane. This is Protein translocase subunit SecA from Streptococcus uberis (strain ATCC BAA-854 / 0140J).